A 411-amino-acid polypeptide reads, in one-letter code: LL-diaminopimelate aminotransferase (411 aa).

The substrate site is built by Tyr15 and Gly42. Pyridoxal 5'-phosphate contacts are provided by residues Tyr72, 108 to 109 (SK), Tyr132, Asn187, Tyr218, and 246 to 248 (SFS). The substrate site is built by Lys109, Tyr132, and Asn187. An N6-(pyridoxal phosphate)lysine modification is found at Lys249. 2 residues coordinate pyridoxal 5'-phosphate: Arg257 and Asn292. The substrate site is built by Asn292 and Arg388.

This sequence belongs to the class-I pyridoxal-phosphate-dependent aminotransferase family. LL-diaminopimelate aminotransferase subfamily. Homodimer. The cofactor is pyridoxal 5'-phosphate.

The enzyme catalyses (2S,6S)-2,6-diaminopimelate + 2-oxoglutarate = (S)-2,3,4,5-tetrahydrodipicolinate + L-glutamate + H2O + H(+). The protein operates within amino-acid biosynthesis; L-lysine biosynthesis via DAP pathway; LL-2,6-diaminopimelate from (S)-tetrahydrodipicolinate (aminotransferase route): step 1/1. Involved in the synthesis of meso-diaminopimelate (m-DAP or DL-DAP), required for both lysine and peptidoglycan biosynthesis. Catalyzes the direct conversion of tetrahydrodipicolinate to LL-diaminopimelate. The polypeptide is LL-diaminopimelate aminotransferase (Cyanothece sp. (strain PCC 7425 / ATCC 29141)).